Consider the following 506-residue polypeptide: MTAPKPVVLCILDGWGLRAEREANAVALAETPTFDRLMATCPNATLVTHGPDVGLPRGQMGNSEVGHTNIGAGRVVAMDLGAIDLAIEEGSFPQNPALRDFIGKVKAKSGTAHLMGVVSDGGVHGHIQHLISAVEVLAGEGIPVVIHAITDGRDVAPTSAGEFVGQLVRVLPEGARIGTVIGRYWAMDRDKRWDRVKRASDAMLHATGEHAPDAEAAVAAALARGETDEFIAPTVVGDYAGARDGDGFFCLNFRADRAREILAGLAQPGFDAYDTGARPDWSAFLGMVDYSKEHDRFMTTAYPKPVIRNTLGEWVASHGLRQFRIAETEKYPHVTFFLNGGREAPETGEDRYMANSPKVATYDLQPEMSAPDVSDHLVEAIGAGYDLIVVNYANPDMVGHTGDLKAAMAAVEEVDRGLGRAVEAVTKAGGAMIVTADHGNCETMVDPETGGPHTAHTTNPVPVILVNGPAGARLHAGRLADLAPTLLQLMQLPQPEEMTGRSLIDA.

Residues D13 and S63 each coordinate Mn(2+). The Phosphoserine intermediate role is filled by S63. Substrate is bound by residues H124, 153–154, R183, R189, 254–257, and K330; these read RD and RADR. D396, H400, D437, H438, and H456 together coordinate Mn(2+).

This sequence belongs to the BPG-independent phosphoglycerate mutase family. As to quaternary structure, monomer. Mn(2+) serves as cofactor.

The enzyme catalyses (2R)-2-phosphoglycerate = (2R)-3-phosphoglycerate. It functions in the pathway carbohydrate degradation; glycolysis; pyruvate from D-glyceraldehyde 3-phosphate: step 3/5. Functionally, catalyzes the interconversion of 2-phosphoglycerate and 3-phosphoglycerate. The polypeptide is 2,3-bisphosphoglycerate-independent phosphoglycerate mutase (Cereibacter sphaeroides (strain ATCC 17023 / DSM 158 / JCM 6121 / CCUG 31486 / LMG 2827 / NBRC 12203 / NCIMB 8253 / ATH 2.4.1.) (Rhodobacter sphaeroides)).